The chain runs to 27 residues: CD59 glycoprotein (27 aa).

2 cysteine pairs are disulfide-bonded: cysteine 3-cysteine 25 and cysteine 6-cysteine 12. Asparagine 17 carries an N-linked (GlcNAc...) asparagine glycan.

Interacts with T-cell surface antigen CD2. N- and O-glycosylated. As to expression, expressed in erythrocytes and lymphocytes. Not detected in platelets.

It is found in the cell membrane. The protein localises to the secreted. In terms of biological role, potent inhibitor of the complement membrane attack complex (MAC) action, which protects self-cells from damage during complement activation. Acts by binding to the beta-haipins of C8 (C8A and C8B) components of the assembling MAC, forming an intermolecular beta-sheet that prevents incorporation of the multiple copies of C9 required for complete formation of the osmolytic pore. This is CD59 glycoprotein from Ovis aries (Sheep).